A 269-amino-acid chain; its full sequence is Membrane protein insertase YidC 1 (269 aa).

The signal sequence occupies residues 1–20 (MKKKFSLIAMAGAALLLLTA). A lipid anchor (N-palmitoyl cysteine) is attached at C21. Residue C21 is the site of S-diacylglycerol cysteine attachment. 4 helical membrane passes run 45–65 (IRFLSFGGLTGVGIILFTIVI), 124–144 (YMGCLPLVVQMPVLWALYQAL), 165–185 (PTFILPILAAVFTFLSSYLMM), and 203–223 (PIFILIMGVNFAAGIALYWVI).

Belongs to the OXA1/ALB3/YidC family. Type 2 subfamily.

Its subcellular location is the cell membrane. Functionally, required for the insertion and/or proper folding and/or complex formation of integral membrane proteins into the membrane. Involved in integration of membrane proteins that insert both dependently and independently of the Sec translocase complex, as well as at least some lipoproteins. The sequence is that of Membrane protein insertase YidC 1 from Lactococcus lactis subsp. lactis (strain IL1403) (Streptococcus lactis).